A 492-amino-acid chain; its full sequence is Protein nucleotidyltransferase YdiU (492 aa).

ATP contacts are provided by Gly94, Gly96, Arg97, Lys117, Asp129, Gly130, Arg180, and Arg187. Asp257 functions as the Proton acceptor in the catalytic mechanism. Mg(2+)-binding residues include Asn258 and Asp267. Residue Asp267 participates in ATP binding.

This sequence belongs to the SELO family. Mg(2+) serves as cofactor. It depends on Mn(2+) as a cofactor.

It carries out the reaction L-seryl-[protein] + ATP = 3-O-(5'-adenylyl)-L-seryl-[protein] + diphosphate. The catalysed reaction is L-threonyl-[protein] + ATP = 3-O-(5'-adenylyl)-L-threonyl-[protein] + diphosphate. It catalyses the reaction L-tyrosyl-[protein] + ATP = O-(5'-adenylyl)-L-tyrosyl-[protein] + diphosphate. The enzyme catalyses L-histidyl-[protein] + UTP = N(tele)-(5'-uridylyl)-L-histidyl-[protein] + diphosphate. It carries out the reaction L-seryl-[protein] + UTP = O-(5'-uridylyl)-L-seryl-[protein] + diphosphate. The catalysed reaction is L-tyrosyl-[protein] + UTP = O-(5'-uridylyl)-L-tyrosyl-[protein] + diphosphate. Nucleotidyltransferase involved in the post-translational modification of proteins. It can catalyze the addition of adenosine monophosphate (AMP) or uridine monophosphate (UMP) to a protein, resulting in modifications known as AMPylation and UMPylation. The protein is Protein nucleotidyltransferase YdiU of Halalkalibacterium halodurans (strain ATCC BAA-125 / DSM 18197 / FERM 7344 / JCM 9153 / C-125) (Bacillus halodurans).